A 78-amino-acid chain; its full sequence is D-alanyl carrier protein (78 aa).

Positions 1-78 (MEFKQEVLDV…NIVNKLTELK (78 aa)) constitute a Carrier domain. Serine 36 carries the O-(pantetheine 4'-phosphoryl)serine modification.

It belongs to the DltC family. Post-translationally, 4'-phosphopantetheine is transferred from CoA to a specific serine of apo-DCP.

Its subcellular location is the cytoplasm. The protein operates within cell wall biogenesis; lipoteichoic acid biosynthesis. In terms of biological role, carrier protein involved in the D-alanylation of lipoteichoic acid (LTA). The loading of thioester-linked D-alanine onto DltC is catalyzed by D-alanine--D-alanyl carrier protein ligase DltA. The DltC-carried D-alanyl group is further transferred to cell membrane phosphatidylglycerol (PG) by forming an ester bond, probably catalyzed by DltD. D-alanylation of LTA plays an important role in modulating the properties of the cell wall in Gram-positive bacteria, influencing the net charge of the cell wall. This is D-alanyl carrier protein from Bacillus velezensis (strain DSM 23117 / BGSC 10A6 / LMG 26770 / FZB42) (Bacillus amyloliquefaciens subsp. plantarum).